Reading from the N-terminus, the 60-residue chain is Small ribosomal subunit protein bS21 (60 aa).

The interval 41–60 is disordered; sequence PEEKRKRKAIARRRQRSRRR. Residues 45–60 are compositionally biased toward basic residues; the sequence is RKRKAIARRRQRSRRR.

The protein belongs to the bacterial ribosomal protein bS21 family.

The chain is Small ribosomal subunit protein bS21 from Gloeothece citriformis (strain PCC 7424) (Cyanothece sp. (strain PCC 7424)).